The primary structure comprises 121 residues: Large ribosomal subunit protein bL19 (121 aa).

This sequence belongs to the bacterial ribosomal protein bL19 family.

In terms of biological role, this protein is located at the 30S-50S ribosomal subunit interface and may play a role in the structure and function of the aminoacyl-tRNA binding site. This is Large ribosomal subunit protein bL19 from Chlorobaculum tepidum (strain ATCC 49652 / DSM 12025 / NBRC 103806 / TLS) (Chlorobium tepidum).